Here is a 184-residue protein sequence, read N- to C-terminus: Large ribosomal subunit protein uL6 (184 aa).

The protein belongs to the universal ribosomal protein uL6 family. As to quaternary structure, part of the 50S ribosomal subunit.

Functionally, this protein binds to the 23S rRNA, and is important in its secondary structure. It is located near the subunit interface in the base of the L7/L12 stalk, and near the tRNA binding site of the peptidyltransferase center. The chain is Large ribosomal subunit protein uL6 from Desulfitobacterium hafniense (strain Y51).